The sequence spans 262 residues: uncharacterized protein (262 aa).

The first 22 residues, 1-22, serve as a signal peptide directing secretion; the sequence is MMNNSITLLLALLVGLVGFAFT.

It belongs to the IIV-6 117L family.

This is an uncharacterized protein from Aedes vexans (Inland floodwater mosquito).